Here is a 126-residue protein sequence, read N- to C-terminus: Nascent polypeptide-associated complex protein (126 aa).

Residues 10–77 (PRMMKQMQKM…AKKVAKAEEK (68 aa)) enclose the NAC-A/B domain.

Belongs to the NAC-alpha family. As to quaternary structure, homodimer. Interacts with the ribosome. Binds ribosomal RNA.

Its function is as follows. Contacts the emerging nascent chain on the ribosome. In Methanococcus maripaludis (strain C6 / ATCC BAA-1332), this protein is Nascent polypeptide-associated complex protein.